The primary structure comprises 401 residues: Phosphoglycerate kinase (401 aa).

Substrate is bound by residues D26–N28, R41, H64–K67, R125, and R158. ATP-binding positions include K209, G300, E331, and G357–S360.

It belongs to the phosphoglycerate kinase family. Monomer.

The protein localises to the cytoplasm. The catalysed reaction is (2R)-3-phosphoglycerate + ATP = (2R)-3-phospho-glyceroyl phosphate + ADP. It functions in the pathway carbohydrate degradation; glycolysis; pyruvate from D-glyceraldehyde 3-phosphate: step 2/5. In Clostridium tetani (strain Massachusetts / E88), this protein is Phosphoglycerate kinase.